Here is a 196-residue protein sequence, read N- to C-terminus: Large ribosomal subunit protein uL5 (196 aa).

Belongs to the universal ribosomal protein uL5 family. In terms of assembly, part of the 50S ribosomal subunit; part of the 5S rRNA/L5/L18/L25 subcomplex. Contacts the 5S rRNA and the P site tRNA. Forms a bridge to the 30S subunit in the 70S ribosome.

Functionally, this is one of the proteins that bind and probably mediate the attachment of the 5S RNA into the large ribosomal subunit, where it forms part of the central protuberance. In the 70S ribosome it contacts protein S13 of the 30S subunit (bridge B1b), connecting the 2 subunits; this bridge is implicated in subunit movement. Contacts the P site tRNA; the 5S rRNA and some of its associated proteins might help stabilize positioning of ribosome-bound tRNAs. The protein is Large ribosomal subunit protein uL5 of Chlorobium phaeobacteroides (strain BS1).